Consider the following 394-residue polypeptide: Thioredoxin-interacting protein (394 aa).

Lysine 212 is covalently cross-linked (Glycyl lysine isopeptide (Lys-Gly) (interchain with G-Cter in ubiquitin)). Serine 361 is modified (phosphoserine).

Belongs to the arrestin family. Homodimer; disulfide-linked. Interacts with TXN/thioredoxin through its redox-active site. Interacts with transcriptional repressors ZBTB16, ZBTB32 and HDAC1. Interacts with DDIT4. Post-translationally, ubiquitinated; undergoes heterotypic 'Lys-48'-/'Lys-63'-branched polyubiquitination catalyzed by ITCH and UBR5 resulting in proteasomal degradation. Deubiquitinated by USP5, leading to TXNIP stabilization.

It localises to the cytoplasm. May act as an oxidative stress mediator by inhibiting thioredoxin activity or by limiting its bioavailability. Interacts with COPS5 and restores COPS5-induced suppression of CDKN1B stability, blocking the COPS5-mediated translocation of CDKN1B from the nucleus to the cytoplasm. Functions as a transcriptional repressor, possibly by acting as a bridge molecule between transcription factors and corepressor complexes, and over-expression will induce G0/G1 cell cycle arrest. Required for the maturation of natural killer cells. Acts as a suppressor of tumor cell growth. Inhibits the proteasomal degradation of DDIT4, and thereby contributes to the inhibition of the mammalian target of rapamycin complex 1 (mTORC1). The sequence is that of Thioredoxin-interacting protein (Txnip) from Rattus norvegicus (Rat).